A 428-amino-acid chain; its full sequence is AP-1 complex subunit mu-1 (428 aa).

The MHD domain occupies 170-426; that stretch reads KNEVFLDVIE…ITMAGEYELR (257 aa).

It belongs to the adaptor complexes medium subunit family. Adaptor protein complex 1 (AP-1) is a heterotetramer composed of two large adaptins (gamma-type subunit and beta-type subunit), a medium adaptin (mu-type subunit) and a small adaptin (sigma-type subunit).

It localises to the golgi apparatus. It is found in the cytoplasmic vesicle. Its subcellular location is the clathrin-coated vesicle membrane. Its function is as follows. Subunit of clathrin-associated adaptor protein complex 1 that plays a role in protein sorting at the trans-Golgi network and early endosomes (TGN/EE). The AP complexes mediate the recruitment of clathrin to membranes and the recognition of sorting signals within the cytosolic tails of transmembrane cargo molecules. Functions redundantly with AP1M2 in multiple post-Golgi trafficking pathways leading from the TGN to the vacuole, the plasma membrane, and the cell-division plane. In Arabidopsis thaliana (Mouse-ear cress), this protein is AP-1 complex subunit mu-1 (AP1M1).